The chain runs to 135 residues: uncharacterized protein (135 aa).

Belongs to the asp23 family.

This is an uncharacterized protein from Bacillus subtilis (strain 168).